The following is a 103-amino-acid chain: MADKEKKKKESILDLSKYIDKTIRVKFQGGREASGILKGFDPLLNLVLDGTMEYMRDPDDQYKLTEDTRQLGLVVCRGTSVVLICPQDGMEAIPNPFVQQQDT.

Alanine 2 is subject to N-acetylalanine. In terms of domain architecture, Sm spans 10 to 90 (ESILDLSKYI…VVLICPQDGM (81 aa)).

The protein belongs to the snRNP Sm proteins family. In terms of assembly, component of the precatalytic spliceosome (spliceosome B complex). Component of the U4/U6-U5 tri-snRNP complex, a building block of the precatalytic spliceosome (spliceosome B complex). The U4/U6-U5 tri-snRNP complex is composed of the U4, U6 and U5 snRNAs and at least PRPF3, PRPF4, PRPF6, PRPF8, PRPF31, SNRNP200, TXNL4A, SNRNP40, SNRPB, SNRPD1, SNRPD2, SNRPD3, SNRPE, SNRPF, SNRPG, DDX23, CD2BP2, PPIH, SNU13, EFTUD2, SART1 and USP39, plus LSM2, LSM3, LSM4, LSM5, LSM6, LSM7 and LSM8. LSM2, LSM3, LSM4, LSM5, LSM6, LSM7 and LSM8 form a heptameric, ring-shaped subcomplex (the LSM2-8 complex) that is part of the U4/U6-U5 tri-snRNP complex and the precatalytic spliceosome. Interacts with TACC1.

The protein resides in the nucleus. Functionally, plays a role in pre-mRNA splicing as component of the U4/U6-U5 tri-snRNP complex that is involved in spliceosome assembly, and as component of the precatalytic spliceosome (spliceosome B complex). The heptameric LSM2-8 complex binds specifically to the 3'-terminal U-tract of U6 snRNA. The polypeptide is U6 snRNA-associated Sm-like protein LSm7 (Lsm7) (Mus musculus (Mouse)).